Reading from the N-terminus, the 90-residue chain is Probable Fe(2+)-trafficking protein (90 aa).

Belongs to the Fe(2+)-trafficking protein family.

Functionally, could be a mediator in iron transactions between iron acquisition and iron-requiring processes, such as synthesis and/or repair of Fe-S clusters in biosynthetic enzymes. The polypeptide is Probable Fe(2+)-trafficking protein (Bordetella avium (strain 197N)).